The chain runs to 513 residues: Histone acetyltransferase KAT5 (513 aa).

The region spanning 8 to 65 is the Tudor-knot domain; it reads IEGCRLPVLRRNQDNEDEWPLAEILSVKDISGRKLFYVHYIDFNKRLDEWVTHERLDL. Position 52 is an N6-acetyllysine (K52). The disordered stretch occupies residues 69 to 106; that stretch reads QFPKKEAKTPTKNGLPGSRPGSPEREVPASAQASGKTL. The residue at position 86 (S86) is a Phosphoserine. S90 bears the Phosphoserine; by CDK1 and CDK9 mark. N6-acetyllysine; by autocatalysis occurs at positions 104 and 120. A disordered region spans residues 122-217; that stretch reads REAIPGGEPD…SAPRMTGSLV (96 aa). The segment covering 133-144 has biased composition (polar residues); that stretch reads PLSSSSCLQPNH. N6-acetyllysine; by autocatalysis occurs at positions 148, 150, 187, and 189. A Phosphoserine modification is found at S199. The 278-residue stretch at 227 to 504 folds into the MYST-type HAT domain; it reads TRMKNIECIE…IDSKCLHFTP (278 aa). The C2HC MYST-type zinc finger occupies 260–285; sequence LYLCEFCLKYGRSLKCLQRHLTKCDL. At K327 the chain carries N6-acetyllysine; by autocatalysis. The interaction with ATF2 stretch occupies residues 368–513; the sequence is ACILTLPPYQ…PKDWSKRGKW (146 aa). Residues 370–372 and 377–383 each bind acetyl-CoA; these read ILT and QRRGYGK. The active-site Proton donor/acceptor is E403. Residues S407 and S416 each contribute to the acetyl-CoA site. K430 is covalently cross-linked (Glycyl lysine isopeptide (Lys-Gly) (interchain with G-Cter in SUMO1); alternate). A Glycyl lysine isopeptide (Lys-Gly) (interchain with G-Cter in SUMO2); alternate cross-link involves residue K430. K451 is covalently cross-linked (Glycyl lysine isopeptide (Lys-Gly) (interchain with G-Cter in SUMO1)).

It belongs to the MYST (SAS/MOZ) family. Component of the NuA4 histone acetyltransferase complex which contains the catalytic subunit KAT5/TIP60 and the subunits EP400, TRRAP/PAF400, BRD8/SMAP, EPC1, DMAP1/DNMAP1, RUVBL1/TIP49, RUVBL2, ING3, actin, ACTL6A/BAF53A, MORF4L1/MRG15, MORF4L2/MRGX, MRGBP, YEATS4/GAS41, VPS72/YL1 and MEAF6. KAT5/TIP60, EPC1, and ING3 together constitute a minimal HAT complex termed Piccolo NuA4. The NuA4 complex interacts with MYC. Interacts with ATM. Interacts with JADE1. Interacts with PLA2G4A/CPLA2, EDNRA and HDAC7. Interacts with the cytoplasmic tail of APP and APBB1/FE65. Interacts with TRIM24 and TRIM68. Forms a complex with SENP6 and UBE2I in response to UV irradiation. Identified in a complex with HINT1. Interacts with ATF2 and CUL3. Interacts with NR1D2 (via N-terminus). Component of a SWR1-like complex. Interacts with FOXP3. Interacts with ZBTB49. Interacts with SRF. Interacts with ATF3; promoting autoacetylation and deubiquitination by USP7. Interacts with EP300/p300; interaction promotes KAT5 autoacetylation. Interacts with PRKDC; interaction is impaired following KAT5 sumoylation. Interacts with GPR50. Interacts with NME3; this interaction enables recruitment of NME3 at DNA damage sites where it plays a role in the repair of DNA. Phosphorylated on Ser-86 and Ser-90; enhanced during G2/M phase. The phosphorylated form has a higher activity. Phosphorylation at Ser-90 by CDK1 or CDK9 is a prerequisite for phosphorylation at Ser-86 by GSK3. Phosphorylation at Ser-86 by GSK3 (GSK3A or GSK3B) activates acetyltransferase and acyltransferase activity. Phosphorylation at Ser-90 by CDK9 promotes KAT5 recruitment to chromatin. Phosphorylation by VRK1 following DNA damage promotes KAT5 association with chromatin and histone acetyltransferase activity. Post-translationally, autoacetylated. Autoacetylation is required for histone acetyltransferase activity. Autoacetylation at Lys-327 is facilitated by interaction with EP300/p300: it prevents ubiquitination and subsequent degradation by the proteasome and promotes acetylation of target proteins. Deacetylated by HDAC3 and SIRT1. Deacetylation by HDAC3 promotes its ubiquitination and cytoplasmic localization. In terms of processing, sumoylated by UBE2I at Lys-430 and Lys-451, leading to increase of its histone acetyltransferase activity in UV-induced DNA damage response, as well as its translocation to nuclear bodies. Sumoylation with SUMO2 by PIAS4 at Lys-430 promotes repair of DNA double-strand breaks (DSBs) via homologous recombination (HR). Sumoylation by PIAS4 impairs interaction with PRKDC, inhibiting non-homologous end joining (NHEJ)-mediated repair of DSBs, thereby facilitating HR. Desumoylated by SENP3. Ubiquitinated by MDM2, leading to its proteasome-dependent degradation. Ubiquitination is prevented by autoacetylation at Lys-327. Ubiquitinated following deacetylation by HDAC3, leading to cytoplasmic localization. Deubiquitinated by USP7 following interaction with ATF3, promoting its stabilization. Expressed in testis, heart, brain, kidney and liver. Weakly expressed in lung.

It is found in the nucleus. Its subcellular location is the chromosome. It localises to the cytoplasm. The protein resides in the centromere. The protein localises to the kinetochore. It is found in the cytoskeleton. Its subcellular location is the spindle pole. It localises to the nucleolus. The protein resides in the perinuclear region. It catalyses the reaction L-lysyl-[histone] + acetyl-CoA = N(6)-acetyl-L-lysyl-[histone] + CoA + H(+). It carries out the reaction L-lysyl-[protein] + acetyl-CoA = N(6)-acetyl-L-lysyl-[protein] + CoA + H(+). The enzyme catalyses (2E)-butenoyl-CoA + L-lysyl-[protein] = N(6)-(2E)-butenoyl-L-lysyl-[protein] + CoA + H(+). The catalysed reaction is 2-hydroxyisobutanoyl-CoA + L-lysyl-[protein] = N(6)-(2-hydroxyisobutanoyl)-L-lysyl-[protein] + CoA + H(+). It catalyses the reaction (S)-lactoyl-CoA + L-lysyl-[protein] = N(6)-[(S)-lactoyl]-L-lysyl-[protein] + CoA + H(+). Acyltransferase and acetyltransferase activities are activated by phosphorylation and autoacetylation. Autoacetylation activates the histone acetyltransferase activity. Its function is as follows. Catalytic subunit of the NuA4 histone acetyltransferase complex, a multiprotein complex involved in transcriptional activation of select genes principally by acetylation of nucleosomal histones H2A and H4. Histone acetylation alters nucleosome-DNA interactions and promotes interaction of the modified histones with other proteins which positively regulate transcription. The NuA4 histone acetyltransferase complex is required for the activation of transcriptional programs associated with proto-oncogene mediated growth induction, tumor suppressor mediated growth arrest and replicative senescence, apoptosis, and DNA repair. The NuA4 complex plays a direct role in repair of DNA double-strand breaks (DSBs) by promoting homologous recombination (HR): the complex inhibits TP53BP1 binding to chromatin via MBTD1, which recognizes and binds histone H4 trimethylated at 'Lys-20' (H4K20me), and KAT5 that catalyzes acetylation of 'Lys-15' of histone H2A (H2AK15ac), thereby blocking the ubiquitination mark required for TP53BP1 localization at DNA breaks. Also involved in DSB repair by mediating acetylation of 'Lys-5' of histone H2AX (H2AXK5ac), promoting NBN/NBS1 assembly at the sites of DNA damage. The NuA4 complex plays a key role in hematopoietic stem cell maintenance and is required to maintain acetylated H2A.Z/H2AZ1 at MYC target genes. The NuA4 complex is also required for spermatid development by promoting acetylation of histones: histone hyperacetylation is required for histone replacement during the transition from round to elongating spermatids. Component of a SWR1-like complex that specifically mediates the removal of histone H2A.Z/H2AZ1 from the nucleosome. Also acetylates non-histone proteins, such as BMAL1, ATM, AURKB, CHKA, CGAS, ERCC4/XPF, LPIN1, TP53/p53, NDC80/HEC1, NR1D2, RAN, SOX4, FOXP3, SQSTM1, ULK1 and RUBCNL/Pacer. Directly acetylates and activates ATM. Promotes nucleotide excision repair (NER) by mediating acetylation of ERCC4/XPF, thereby promoting formation of the ERCC4-ERCC1 complex. Relieves NR1D2-mediated inhibition of APOC3 expression by acetylating NR1D2. Acts as a regulator of regulatory T-cells (Treg) by catalyzing FOXP3 acetylation, thereby promoting FOXP3 transcriptional repressor activity. Involved in skeletal myoblast differentiation by mediating acetylation of SOX4. Catalyzes acetylation of APBB1/FE65, increasing its transcription activator activity. Promotes transcription elongation during the activation phase of the circadian cycle by catalyzing acetylation of BMAL1, promoting elongation of circadian transcripts. Together with GSK3 (GSK3A or GSK3B), acts as a regulator of autophagy: phosphorylated at Ser-86 by GSK3 under starvation conditions, leading to activate acetyltransferase activity and promote acetylation of key autophagy regulators, such as ULK1 and RUBCNL/Pacer. Acts as a regulator of the cGAS-STING innate antiviral response by catalyzing acetylation the N-terminus of CGAS, thereby promoting CGAS DNA-binding and activation. Also regulates lipid metabolism by mediating acetylation of CHKA or LPIN1. Promotes lipolysis of lipid droplets following glucose deprivation by mediating acetylation of isoform 1 of CHKA, thereby promoting monomerization of CHKA and its conversion into a tyrosine-protein kinase. Acts as a regulator of fatty-acid-induced triacylglycerol synthesis by catalyzing acetylation of LPIN1, thereby promoting the synthesis of diacylglycerol. In addition to protein acetyltransferase, can use different acyl-CoA substrates, such as (2E)-butenoyl-CoA (crotonyl-CoA), S-lactoyl-CoA (lactyl-CoA) and 2-hydroxyisobutanoyl-CoA (2-hydroxyisobutyryl-CoA), and is able to mediate protein crotonylation, lactylation and 2-hydroxyisobutyrylation, respectively. Acts as a key regulator of chromosome segregation and kinetochore-microtubule attachment during mitosis by mediating acetylation or crotonylation of target proteins. Catalyzes acetylation of AURKB at kinetochores, increasing AURKB activity and promoting accurate chromosome segregation in mitosis. Acetylates RAN during mitosis, promoting microtubule assembly at mitotic chromosomes. Acetylates NDC80/HEC1 during mitosis, promoting robust kinetochore-microtubule attachment. Catalyzes crotonylation of MAPRE1/EB1, thereby ensuring accurate spindle positioning in mitosis. Catalyzes lactylation of NBN/NBS1 in response to DNA damage, thereby promoting DNA double-strand breaks (DSBs) via homologous recombination (HR). This chain is Histone acetyltransferase KAT5, found in Mus musculus (Mouse).